A 146-amino-acid polypeptide reads, in one-letter code: Gonadotropin subunit beta-2 (146 aa).

Positions 1–28 are cleaved as a signal peptide; it reads TGTPVKILVVRNILLLLFCLVVLLVFAQ. 6 disulfides stabilise this stretch: Cys35–Cys83, Cys49–Cys98, Cys52–Cys136, Cys60–Cys114, Cys64–Cys116, and Cys119–Cys126. Asn39 carries an N-linked (GlcNAc...) asparagine glycan.

Belongs to the glycoprotein hormones subunit beta family. Heterodimer of an alpha and a beta chain.

The protein resides in the secreted. In terms of biological role, involved in gametogenesis and steroidogenesis. This Ctenopharyngodon idella (Grass carp) protein is Gonadotropin subunit beta-2 (cgbb).